Reading from the N-terminus, the 503-residue chain is Maturase K (503 aa).

This sequence belongs to the intron maturase 2 family. MatK subfamily.

The protein localises to the plastid. It localises to the chloroplast. Functionally, usually encoded in the trnK tRNA gene intron. Probably assists in splicing its own and other chloroplast group II introns. This chain is Maturase K, found in Cercocarpus betuloides (Mountain mahogany).